The sequence spans 90 residues: DNA-directed RNA polymerase subunit omega (90 aa).

The protein belongs to the RNA polymerase subunit omega family. In terms of assembly, the RNAP catalytic core consists of 2 alpha, 1 beta, 1 beta' and 1 omega subunit. When a sigma factor is associated with the core the holoenzyme is formed, which can initiate transcription.

The catalysed reaction is RNA(n) + a ribonucleoside 5'-triphosphate = RNA(n+1) + diphosphate. Promotes RNA polymerase assembly. Latches the N- and C-terminal regions of the beta' subunit thereby facilitating its interaction with the beta and alpha subunits. This Rhodopirellula baltica (strain DSM 10527 / NCIMB 13988 / SH1) protein is DNA-directed RNA polymerase subunit omega.